The chain runs to 209 residues: Probable phosphatase C1687.21 (209 aa).

The active-site Tele-phosphohistidine intermediate is the His8. Glu82 serves as the catalytic Proton donor/acceptor.

Belongs to the phosphoglycerate mutase family. BPG-dependent PGAM subfamily.

The protein resides in the cytoplasm. The protein localises to the nucleus. In Schizosaccharomyces pombe (strain 972 / ATCC 24843) (Fission yeast), this protein is Probable phosphatase C1687.21.